Consider the following 421-residue polypeptide: Ankyrin repeat and SOCS box protein 6 (421 aa).

ANK repeat units lie at residues Glu67–Phe97, Thr102–Arg131, His136–Ala166, His170–Ala205, Gly226–Glu255, and Glu260–Cys289. The SOCS box domain maps to Ala360–Gly415.

This sequence belongs to the ankyrin SOCS box (ASB) family. Binds APS. Identified in a complex with ELOB and ELOC. Interacts with CUL5 and RNF7. Interacts with SQSTM1.

It localises to the cytoplasm. It participates in protein modification; protein ubiquitination. Functionally, probable substrate-recognition component of a SCF-like ECS (Elongin-Cullin-SOCS-box protein) E3 ubiquitin-protein ligase complex which mediates the ubiquitination and subsequent proteasomal degradation of target proteins. May play a role in the regulation of cell proliferation and autophagy by promoting the ubiquitination and degradation of SQSTM1. This Pongo abelii (Sumatran orangutan) protein is Ankyrin repeat and SOCS box protein 6 (ASB6).